The chain runs to 126 residues: Protein ApaG (126 aa).

The ApaG domain maps to 2 to 126 (SDPRYQIDVS…FRLAVPGALH (125 aa)).

This Pseudomonas putida (strain ATCC 700007 / DSM 6899 / JCM 31910 / BCRC 17059 / LMG 24140 / F1) protein is Protein ApaG.